The primary structure comprises 142 residues: Putative pre-16S rRNA nuclease (142 aa).

The protein belongs to the YqgF nuclease family.

The protein localises to the cytoplasm. Could be a nuclease involved in processing of the 5'-end of pre-16S rRNA. The sequence is that of Putative pre-16S rRNA nuclease from Shouchella clausii (strain KSM-K16) (Alkalihalobacillus clausii).